A 267-amino-acid polypeptide reads, in one-letter code: Enolase-phosphatase E1 (267 aa).

The Mg(2+) site is built by D11 and E13. Substrate-binding positions include 155–156 (SS) and K189. Residue D215 coordinates Mg(2+).

This sequence belongs to the HAD-like hydrolase superfamily. MasA/MtnC family. As to quaternary structure, monomer. Mg(2+) is required as a cofactor.

It is found in the cytoplasm. The protein localises to the nucleus. The enzyme catalyses 5-methylsulfanyl-2,3-dioxopentyl phosphate + H2O = 1,2-dihydroxy-5-(methylsulfanyl)pent-1-en-3-one + phosphate. It participates in amino-acid biosynthesis; L-methionine biosynthesis via salvage pathway; L-methionine from S-methyl-5-thio-alpha-D-ribose 1-phosphate: step 3/6. It functions in the pathway amino-acid biosynthesis; L-methionine biosynthesis via salvage pathway; L-methionine from S-methyl-5-thio-alpha-D-ribose 1-phosphate: step 4/6. Its function is as follows. Bifunctional enzyme that catalyzes the enolization of 2,3-diketo-5-methylthiopentyl-1-phosphate (DK-MTP-1-P) into the intermediate 2-hydroxy-3-keto-5-methylthiopentenyl-1-phosphate (HK-MTPenyl-1-P), which is then dephosphorylated to form the acireductone 1,2-dihydroxy-3-keto-5-methylthiopentene (DHK-MTPene). This Dictyostelium discoideum (Social amoeba) protein is Enolase-phosphatase E1 (enoph1).